Reading from the N-terminus, the 276-residue chain is Radial spoke head protein 9 homolog (276 aa).

It belongs to the flagellar radial spoke RSP9 family. Component of the axonemal radial spoke 1 (RS1) and 2 (RS2) complexes, at least composed of spoke head proteins RSPH1, RSPH3, RSPH9 and the cilia-specific component RSPH4A or sperm-specific component RSPH6A, spoke stalk proteins RSPH14, DNAJB13, DYDC1, ROPN1L and NME5, and the RS1 complex-specific anchor protein IQUB. Interacts with IQUB. Interacts with RSPH3B. Interacts with RSPH4A. Interacts with RSPH6A. Interacts with CFAP61. Interacts with LRRC23. Expressed in the testis, trachea, lung, oviduct and ependymal cells (at protein level).

The protein localises to the cytoplasm. It is found in the cytoskeleton. Its subcellular location is the cilium axoneme. It localises to the flagellum axoneme. The protein resides in the cell projection. The protein localises to the kinocilium. Its function is as follows. Functions as part of axonemal radial spoke complexes that play an important part in the motility of sperm and cilia. Essential for both the radial spoke head assembly and the central pair microtubule stability in ependymal motile cilia. Required for motility of olfactory and neural cilia and for the structural integrity of ciliary axonemes in both 9+0 and 9+2 motile cilia. The protein is Radial spoke head protein 9 homolog (Rsph9) of Mus musculus (Mouse).